The primary structure comprises 369 residues: H-2 class I histocompatibility antigen, K-B alpha chain (369 aa).

The signal sequence occupies residues 1 to 21 (MVPCTLLLLLAAALAPTQTRA). The alpha-1 stretch occupies residues 22–111 (GPHSLRYFVT…LLGYYNQSKG (90 aa)). Residues 22-305 (GPHSLRYFVT…EPPPSTVSNM (284 aa)) are Extracellular-facing. Asn-107 is a glycosylation site (N-linked (GlcNAc...) asparagine). An alpha-2 region spans residues 112–203 (GSHTIQVISG…KNGNATLLRT (92 aa)). The cysteines at positions 122 and 185 are disulfide-linked. N-linked (GlcNAc...) asparagine glycosylation occurs at Asn-197. Residues 204-295 (DSPKAHVTHH…GLPEPLTLRW (92 aa)) are alpha-3. In terms of domain architecture, Ig-like C1-type spans 206–294 (PKAHVTHHSR…QGLPEPLTLR (89 aa)). The cysteines at positions 224 and 280 are disulfide-linked. A connecting peptide region spans residues 296–305 (EPPPSTVSNM). A helical transmembrane segment spans residues 306-328 (ATVAVLVVLGAAIVTGAVVAFVM). Topologically, residues 329 to 369 (KMRRRNTGGKGGDYALAPGSQTSDLSLPDCKVMVHDPHSLA) are cytoplasmic. Phosphoserine is present on residues Ser-351 and Ser-354.

Belongs to the MHC class I family. In terms of assembly, heterodimer of an alpha chain and a beta chain (beta-2-microglobulin).

It localises to the membrane. Functionally, involved in the presentation of foreign antigens to the immune system. This chain is H-2 class I histocompatibility antigen, K-B alpha chain (H2-K1), found in Mus musculus (Mouse).